Reading from the N-terminus, the 534-residue chain is EH domain-containing protein 1 (534 aa).

Methionine 1 carries the post-translational modification N-acetylmethionine. Residues 55–286 (FDNKPMVLLV…DLFKDIQSLP (232 aa)) enclose the Dynamin-type G domain. The segment at 65-72 (GQYSTGKT) is G1 motif. Residue 65 to 72 (GQYSTGKT) participates in ATP binding. A G2 motif region spans residues 91–92 (EP). The G3 motif stretch occupies residues 153 to 156 (DTPG). A coiled-coil region spans residues 198–227 (DEFSEVIKALKNHEDKIRVVLNKADQIETQ). A G4 motif region spans residues 219–222 (NKAD). Lysine 220 contributes to the ATP binding site. Isoleucine 243 is a region of interest (G5 motif). Residue tryptophan 258 coordinates ATP. Serine 355 and serine 456 each carry phosphoserine. One can recognise an EH domain in the interval 444–532 (DKPTYDEIFY…PHLVPPSKRR (89 aa)). The region spanning 476–511 (LPNTVLGKIWKLADVDKDGLLDDEEFALANHLIKVK) is the EF-hand domain. Ca(2+)-binding residues include aspartate 489, aspartate 491, aspartate 493, and glutamate 500.

It belongs to the TRAFAC class dynamin-like GTPase superfamily. Dynamin/Fzo/YdjA family. EHD subfamily. As to quaternary structure, homooligomer, and heterooligomer with EHD2, EHD3 and EHD4, ATP-binding is required for heterooligomerization. Interacts (via EH domain) with MICALL1 (via NPF1 motif); the interaction is direct and recruits EHD1 to membranes. Interacts with RAB35; the interaction is indirect through MICALL1 and recruits EHD1 to membranes. Interacts (via EH domain) with PACSIN2 (via NPF motifs); regulates localization to tubular recycling endosome membranes. Interacts with PACSIN1. Interacts with RAB8A. Interacts with FER1L5 (via second C2 domain). Interacts with MYOF. Interacts with ZFYVE20. Interacts (via EH domain) with RAB11FIP2.

It localises to the recycling endosome membrane. It is found in the early endosome membrane. Its subcellular location is the cell membrane. The protein resides in the cell projection. The protein localises to the cilium membrane. ATP- and membrane-binding protein that controls membrane reorganization/tubulation upon ATP hydrolysis. Acts in early endocytic membrane fusion and membrane trafficking of recycling endosomes. Recruited to endosomal membranes upon nerve growth factor stimulation, indirectly regulates neurite outgrowth. Plays a role in myoblast fusion. Involved in the unidirectional retrograde dendritic transport of endocytosed BACE1 and in efficient sorting of BACE1 to axons implicating a function in neuronal APP processing. Plays a role in the formation of the ciliary vesicle (CV), an early step in cilium biogenesis. Proposed to be required for the fusion of distal appendage vesicles (DAVs) to form the CV by recruiting SNARE complex component SNAP29. Is required for recruitment of transition zone proteins CEP290, RPGRIP1L, TMEM67 and B9D2, and of IFT20 following DAV reorganization before Rab8-dependent ciliary membrane extension. Required for the loss of CCP110 form the mother centriole essential for the maturation of the basal body during ciliogenesis. This is EH domain-containing protein 1 from Pongo abelii (Sumatran orangutan).